Here is a 380-residue protein sequence, read N- to C-terminus: Cytochrome b (380 aa).

Transmembrane regions (helical) follow at residues 33 to 53 (SGSL…FLAM), 77 to 98 (WLIR…YLHV), 113 to 133 (WNIG…GYVL), and 178 to 198 (FFAF…IHLL). Positions 83 and 97 each coordinate heme b. The heme b site is built by H182 and H196. H201 is a binding site for a ubiquinone. 4 consecutive transmembrane segments (helical) span residues 226–246 (YKDL…ALFS), 288–308 (LGGV…PILH), 320–340 (LSQI…WIGG), and 347–367 (FVLI…IALP).

The protein belongs to the cytochrome b family. As to quaternary structure, the cytochrome bc1 complex contains 3 respiratory subunits (MT-CYB, CYC1 and UQCRFS1), 2 core proteins (UQCRC1 and UQCRC2) and probably 6 low-molecular weight proteins. Heme b serves as cofactor.

The protein resides in the mitochondrion inner membrane. Component of the ubiquinol-cytochrome c reductase complex (complex III or cytochrome b-c1 complex) that is part of the mitochondrial respiratory chain. The b-c1 complex mediates electron transfer from ubiquinol to cytochrome c. Contributes to the generation of a proton gradient across the mitochondrial membrane that is then used for ATP synthesis. This is Cytochrome b (mt-cyb) from Polyodon spathula (North American paddlefish).